We begin with the raw amino-acid sequence, 325 residues long: Replication factor C small subunit (325 aa).

47–54 (GPPGTGKT) contacts ATP.

This sequence belongs to the activator 1 small subunits family. RfcS subfamily. In terms of assembly, heteromultimer composed of small subunits (RfcS) and large subunits (RfcL).

Part of the RFC clamp loader complex which loads the PCNA sliding clamp onto DNA. The polypeptide is Replication factor C small subunit (Aeropyrum pernix (strain ATCC 700893 / DSM 11879 / JCM 9820 / NBRC 100138 / K1)).